A 65-amino-acid polypeptide reads, in one-letter code: Large ribosomal subunit protein bL31 (65 aa).

4 residues coordinate Zn(2+): C16, C18, C36, and C39.

Belongs to the bacterial ribosomal protein bL31 family. Type A subfamily. In terms of assembly, part of the 50S ribosomal subunit. It depends on Zn(2+) as a cofactor.

Binds the 23S rRNA. This Geotalea daltonii (strain DSM 22248 / JCM 15807 / FRC-32) (Geobacter daltonii) protein is Large ribosomal subunit protein bL31.